We begin with the raw amino-acid sequence, 138 residues long: Large ribosomal subunit protein bL17 (138 aa).

Belongs to the bacterial ribosomal protein bL17 family. In terms of assembly, part of the 50S ribosomal subunit. Contacts protein L32.

In Nitrobacter winogradskyi (strain ATCC 25391 / DSM 10237 / CIP 104748 / NCIMB 11846 / Nb-255), this protein is Large ribosomal subunit protein bL17.